A 579-amino-acid polypeptide reads, in one-letter code: Lens epithelium-derived growth factor (579 aa).

The PWWP domain maps to 1 to 64; sequence MSRDFKPGDL…PKDIFPYSEN (64 aa). 4 disordered regions span residues 62–81, 88–203, 215–397, and 492–579; these read SENK…NEGL, PKVK…EEAA, AAPV…SMDS, and AEQK…FENK. Polar residues predominate over residues 94 to 107; it reads HQPSHPAVNTSIKE. The span at 153–173 shows a compositional bias: basic and acidic residues; sequence KEMHSTKEDEEPSEKNSKEGV. Residues 184–193 are compositionally biased toward basic residues; it reads VARRGRKRKA. The Nuclear localization signal motif lies at 186-196; sequence RRGRKRKAEKQ. Residues 215 to 224 are compositionally biased toward low complexity; that stretch reads AAPVTVSPKV. Residues 261–308 show a composition bias toward basic and acidic residues; sequence EEEKAKKKGPDEKPKKQGKKDEEGQKEEEKPKKEYDKKDGKKEAEPKR. Positions 321-330 are enriched in acidic residues; the sequence is DSEDEGGEEE. Over residues 334–349 the composition is skewed to basic residues; it reads KKKGGRSFQSTHRRNI. A coiled-coil region spans residues 347-442; sequence RNIMRGQHEK…SMQQAQKHTE (96 aa). 2 stretches are compositionally biased toward basic and acidic residues: residues 352 to 397 and 492 to 522; these read GQHE…SMDS and AEQK…KDQT. Residues 387 to 464 are integrase-binding domain (IBD); that stretch reads MEKKRETSMD…VSQVIMEKST (78 aa). Residues 530–543 show a composition bias toward polar residues; sequence GSETQDTNQSQHNG. A compositionally biased stretch (basic and acidic residues) spans 544–579; that stretch reads ENAEEKDKLEVASKKKTCGEESELEKPAKESAFENK.

This sequence belongs to the HDGF family.

It localises to the nucleus. In terms of biological role, transcriptional coactivator involved in neuroepithelial stem cell differentiation and neurogenesis. Involved in particular in lens epithelial cell gene regulation and stress responses. May play an important role in lens epithelial to fiber cell terminal differentiation. May play a protective role during stress-induced apoptosis. The chain is Lens epithelium-derived growth factor (PSIP1) from Gallus gallus (Chicken).